Here is a 237-residue protein sequence, read N- to C-terminus: Proteasome subunit beta (237 aa).

Positions 1-27 (MSKFPDLPGMKNLDANPYEPELASFDD) are disordered. Residues 1 to 42 (MSKFPDLPGMKNLDANPYEPELASFDDMDADAGDGDAVAKTG) constitute a propeptide, removed in mature form; by autocatalysis. Thr43 (nucleophile) is an active-site residue.

This sequence belongs to the peptidase T1B family. As to quaternary structure, the 20S proteasome core is composed of 14 alpha and 14 beta subunits that assemble into four stacked heptameric rings, resulting in a barrel-shaped structure. The two inner rings, each composed of seven catalytic beta subunits, are sandwiched by two outer rings, each composed of seven alpha subunits. The catalytic chamber with the active sites is on the inside of the barrel. Has a gated structure, the ends of the cylinder being occluded by the N-termini of the alpha-subunits. Is capped at one or both ends by the proteasome regulatory ATPase, PAN.

It localises to the cytoplasm. The catalysed reaction is Cleavage of peptide bonds with very broad specificity.. With respect to regulation, the formation of the proteasomal ATPase PAN-20S proteasome complex, via the docking of the C-termini of PAN into the intersubunit pockets in the alpha-rings, triggers opening of the gate for substrate entry. Interconversion between the open-gate and close-gate conformations leads to a dynamic regulation of the 20S proteasome proteolysis activity. Functionally, component of the proteasome core, a large protease complex with broad specificity involved in protein degradation. The chain is Proteasome subunit beta from Halomicrobium mukohataei (strain ATCC 700874 / DSM 12286 / JCM 9738 / NCIMB 13541) (Haloarcula mukohataei).